Reading from the N-terminus, the 627-residue chain is UvrABC system protein C (627 aa).

The 79-residue stretch at 22-100 (NNPGVYRMFN…IKRLRPRFNV (79 aa)) folds into the GIY-YIG domain. The 36-residue stretch at 210–245 (QSVKDHLAAAMQAASADLDFEHAAVYRDRLAALSHV) folds into the UVR domain.

This sequence belongs to the UvrC family. Interacts with UvrB in an incision complex.

The protein localises to the cytoplasm. In terms of biological role, the UvrABC repair system catalyzes the recognition and processing of DNA lesions. UvrC both incises the 5' and 3' sides of the lesion. The N-terminal half is responsible for the 3' incision and the C-terminal half is responsible for the 5' incision. This is UvrABC system protein C from Brucella abortus biovar 1 (strain 9-941).